The chain runs to 266 residues: Glutamate racemase (266 aa).

Substrate-binding positions include 9 to 10 and 41 to 42; these read DS and YG. The active-site Proton donor/acceptor is the Cys73. 74-75 contacts substrate; it reads NS. Catalysis depends on Cys183, which acts as the Proton donor/acceptor. 184 to 185 contacts substrate; that stretch reads TH.

Belongs to the aspartate/glutamate racemases family.

The catalysed reaction is L-glutamate = D-glutamate. The protein operates within cell wall biogenesis; peptidoglycan biosynthesis. Functionally, provides the (R)-glutamate required for cell wall biosynthesis. The protein is Glutamate racemase of Shewanella halifaxensis (strain HAW-EB4).